Reading from the N-terminus, the 305-residue chain is Dihydroorotate dehydrogenase B (NAD(+)), catalytic subunit (305 aa).

Residues S23 and 47–48 (KG) each bind FMN. Substrate-binding positions include K47 and 71-75 (NAIGL). Residues N101 and N129 each contribute to the FMN site. Position 129 (N129) interacts with substrate. The Nucleophile role is filled by C132. FMN-binding residues include K167 and I193. 194–195 (NT) lines the substrate pocket. FMN is bound by residues G219, 245–246 (GG), and 267–268 (GT).

The protein belongs to the dihydroorotate dehydrogenase family. Type 1 subfamily. As to quaternary structure, heterotetramer of 2 PyrK and 2 PyrD type B subunits. Requires FMN as cofactor.

The protein localises to the cytoplasm. It catalyses the reaction (S)-dihydroorotate + NAD(+) = orotate + NADH + H(+). Its pathway is pyrimidine metabolism; UMP biosynthesis via de novo pathway; orotate from (S)-dihydroorotate (NAD(+) route): step 1/1. Catalyzes the conversion of dihydroorotate to orotate with NAD(+) as electron acceptor. The protein is Dihydroorotate dehydrogenase B (NAD(+)), catalytic subunit (pyrD) of Citrifermentans bemidjiense (strain ATCC BAA-1014 / DSM 16622 / JCM 12645 / Bem) (Geobacter bemidjiensis).